A 447-amino-acid chain; its full sequence is Trigger factor (447 aa).

Residues 164 to 249 form the PPIase FKBP-type domain; it reads GNQVTFDFEG…VKLVEKSKLP (86 aa).

The protein belongs to the FKBP-type PPIase family. Tig subfamily.

The protein localises to the cytoplasm. The catalysed reaction is [protein]-peptidylproline (omega=180) = [protein]-peptidylproline (omega=0). Functionally, involved in protein export. Acts as a chaperone by maintaining the newly synthesized protein in an open conformation. Functions as a peptidyl-prolyl cis-trans isomerase. The polypeptide is Trigger factor (Psychrobacter cryohalolentis (strain ATCC BAA-1226 / DSM 17306 / VKM B-2378 / K5)).